A 187-amino-acid polypeptide reads, in one-letter code: Prepilin peptidase-dependent protein B (187 aa).

The propeptide at 1-7 (MPVKEQG) is leader sequence. Position 8 is an N-methylphenylalanine (Phe-8). A helical membrane pass occupies residues 8–28 (FSLLEVLIAMAISSVLLLGAA).

The protein resides in the membrane. In terms of biological role, not yet known. This chain is Prepilin peptidase-dependent protein B (ppdB), found in Escherichia coli (strain K12).